A 288-amino-acid chain; its full sequence is Putative alkaline ceramidase dcd3A (288 aa).

N-linked (GlcNAc...) asparagine glycosylation is present at Asn23. A run of 7 helical transmembrane segments spans residues 41 to 61 (IISL…GTGV), 78 to 98 (VILS…YHAT), 105 to 125 (LFDE…MVTV), 146 to 166 (HLLP…ILVI), 172 to 192 (ILQV…IYLI), 206 to 226 (SYLY…WVVE), and 240 to 260 (LHAF…QFLI).

The protein belongs to the alkaline ceramidase family.

The protein resides in the membrane. The chain is Putative alkaline ceramidase dcd3A (dcd3A) from Dictyostelium discoideum (Social amoeba).